Here is a 179-residue protein sequence, read N- to C-terminus: uncharacterized protein (179 aa).

One can recognise a Rhodanese domain in the interval 21–109 (QQDAVILVDV…WKQAGLPTVK (89 aa)). Helical transmembrane passes span 115-135 (ISIMRQVQIIAGSLVLTGVLL) and 138-158 (FVAPGFYFLSGFVGAGLLFAG).

The protein resides in the cell membrane. This is an uncharacterized protein from Synechocystis sp. (strain ATCC 27184 / PCC 6803 / Kazusa).